We begin with the raw amino-acid sequence, 261 residues long: MGSTESPLLGQTTPNSVISTTLNDLSNWARLSSLWPLLYGTSCCFIEFASLIGSRFDFDRYGLVPRSSPRQADLIITAGTVTMKMAPSLVRLYEQMPGPKYVIAMGACTITGGMFSTDSYSTVRGVDKLIPVDVYLPGCPPKPEAIIDAIIKLRKKVAREIYEDRTKLQQGKRYFTQNHKFRVGSSLYTGNYDQKLLHKSPEPQSESTSEILSKTFESTSEIPSDFVKYENSVSFQESRNEEYFVKSNEQEINFQKFHWKC.

[4Fe-4S] cluster contacts are provided by C43, C44, C108, and C139.

The protein belongs to the complex I 20 kDa subunit family. As to quaternary structure, NDH is composed of at least 16 different subunits, 5 of which are encoded in the nucleus. Requires [4Fe-4S] cluster as cofactor.

It is found in the plastid. The protein resides in the chloroplast thylakoid membrane. It carries out the reaction a plastoquinone + NADH + (n+1) H(+)(in) = a plastoquinol + NAD(+) + n H(+)(out). The enzyme catalyses a plastoquinone + NADPH + (n+1) H(+)(in) = a plastoquinol + NADP(+) + n H(+)(out). In terms of biological role, NDH shuttles electrons from NAD(P)H:plastoquinone, via FMN and iron-sulfur (Fe-S) centers, to quinones in the photosynthetic chain and possibly in a chloroplast respiratory chain. The immediate electron acceptor for the enzyme in this species is believed to be plastoquinone. Couples the redox reaction to proton translocation, and thus conserves the redox energy in a proton gradient. This is NAD(P)H-quinone oxidoreductase subunit K, chloroplastic from Cycas taitungensis (Prince sago).